A 129-amino-acid chain; its full sequence is Bacteriohemerythrin (129 aa).

Residues histidine 19, histidine 59, glutamate 63, histidine 78, histidine 82, histidine 119, and aspartate 124 each contribute to the Fe cation site.

This sequence belongs to the hemerythrin family. In terms of assembly, monomer.

Functionally, oxygen-binding protein. May be involved in a storage mechanism or for delivery to oxygen-requiring enzymes. The oxygen-binding site contains two iron atoms. The chain is Bacteriohemerythrin from Clostridium acetobutylicum (strain ATCC 824 / DSM 792 / JCM 1419 / IAM 19013 / LMG 5710 / NBRC 13948 / NRRL B-527 / VKM B-1787 / 2291 / W).